Reading from the N-terminus, the 155-residue chain is Cytochrome c-type biogenesis protein CcmE (155 aa).

At Met-1–Arg-8 the chain is on the cytoplasmic side. A helical; Signal-anchor for type II membrane protein transmembrane segment spans residues Leu-9–Ala-29. Over Leu-30–Lys-155 the chain is Periplasmic. Heme contacts are provided by His-131 and Tyr-135.

The protein belongs to the CcmE/CycJ family.

It localises to the cell inner membrane. In terms of biological role, heme chaperone required for the biogenesis of c-type cytochromes. Transiently binds heme delivered by CcmC and transfers the heme to apo-cytochromes in a process facilitated by CcmF and CcmH. This Psychromonas ingrahamii (strain DSM 17664 / CCUG 51855 / 37) protein is Cytochrome c-type biogenesis protein CcmE.